We begin with the raw amino-acid sequence, 187 residues long: Large ribosomal subunit protein eL18y (187 aa).

Positions 151–187 (FGPAPGVPHSHSKPYVRAKGRKFEKARGKRKSRGFKV) are disordered. Composition is skewed to basic residues over residues 160 to 170 (SHSKPYVRAKG) and 177 to 187 (RGKRKSRGFKV).

Belongs to the eukaryotic ribosomal protein eL18 family. Interacts with NIK1. Interacts directly with EXA1. Ubiquitous.

Its subcellular location is the cytoplasm. This is Large ribosomal subunit protein eL18y (RPL18B) from Arabidopsis thaliana (Mouse-ear cress).